The following is a 307-amino-acid chain: Methionyl-tRNA formyltransferase (307 aa).

Residue 108–111 (SLLP) coordinates (6S)-5,6,7,8-tetrahydrofolate.

Belongs to the Fmt family.

It catalyses the reaction L-methionyl-tRNA(fMet) + (6R)-10-formyltetrahydrofolate = N-formyl-L-methionyl-tRNA(fMet) + (6S)-5,6,7,8-tetrahydrofolate + H(+). Its function is as follows. Attaches a formyl group to the free amino group of methionyl-tRNA(fMet). The formyl group appears to play a dual role in the initiator identity of N-formylmethionyl-tRNA by promoting its recognition by IF2 and preventing the misappropriation of this tRNA by the elongation apparatus. This chain is Methionyl-tRNA formyltransferase, found in Renibacterium salmoninarum (strain ATCC 33209 / DSM 20767 / JCM 11484 / NBRC 15589 / NCIMB 2235).